Reading from the N-terminus, the 138-residue chain is Flavodoxin (138 aa).

The 136-residue stretch at 1-136 (MKIVYWSGTG…DCIEFGKKIA (136 aa)) folds into the Flavodoxin-like domain.

This sequence belongs to the flavodoxin family. It depends on FMN as a cofactor.

Its function is as follows. Low-potential electron donor to a number of redox enzymes. This Clostridium beijerinckii (Clostridium MP) protein is Flavodoxin.